We begin with the raw amino-acid sequence, 240 residues long: Large ribosomal subunit protein uL1 (240 aa).

It belongs to the universal ribosomal protein uL1 family. As to quaternary structure, part of the 50S ribosomal subunit.

Binds directly to 23S rRNA. The L1 stalk is quite mobile in the ribosome, and is involved in E site tRNA release. Its function is as follows. Protein L1 is also a translational repressor protein, it controls the translation of the L11 operon by binding to its mRNA. The sequence is that of Large ribosomal subunit protein uL1 from Nocardioides sp. (strain ATCC BAA-499 / JS614).